The following is an 86-amino-acid chain: Beta-toxin Tz1 (86 aa).

An N-terminal signal peptide occupies residues 1–20 (MTRFVLFICCFFLIGMVVEC). The 63-residue stretch at 21–83 (KDGYLVGNDG…TWDRATNRCG (63 aa)) folds into the LCN-type CS-alpha/beta domain. 4 cysteine pairs are disulfide-bonded: C31–C82, C35–C57, C43–C63, and C47–C65. R84 carries the post-translational modification Arginine amide.

This sequence belongs to the long (4 C-C) scorpion toxin superfamily. Sodium channel inhibitor family. Beta subfamily. Expressed by the venom gland.

It is found in the secreted. In terms of biological role, beta toxins bind voltage-independently at site-4 of sodium channels (Nav) and shift the voltage of activation toward more negative potentials thereby affecting sodium channel activation and promoting spontaneous and repetitive firing. Strongly affects skeletal muscle channels Nav1.4/SCN4A, poorly affects the neuronal channels Nav1.6/SCN8A and Nav1.2/SCN2A. Induces spastic paralysis of rear limbs, increased salivation, apnea, tachycardia and increased perspiration. In Tityus zulianus (Venezuelan scorpion), this protein is Beta-toxin Tz1.